A 516-amino-acid chain; its full sequence is MENGQGTGSKLGLPPLTPEQQEALQKAKKYAMEQSIKSVLVKQTIAHQQQQLTNLQMAAVTMGFGDPLSSLQSVAAQRQRALAIMCRVYVGSIYYELGEDTIRQAFAPFGPIKSIDMSWDSVTMKHKGFAFVEYEVPEAAQLALEQMNSVMLGGRNIKVGRPGSIGQAQPIIEQLAEEARAYNRIYVASIHPDLSDDDIKSVFEAFGKIKSCMLAREPTTGKHKGFGFIEYEKPQSSLDAVSSMNLFDLGGQYLRVGKAVTPPMPLLTPTTPGGLPPAAAVAAAAATAKITAQEAVAGTVLSSLASPAHILSQQMGLPQAVLAAQAPGIITGLSTTKTVFHLVGLVNPVLASPPVTAPASMGTPTSAVQLHTEVKREEDSRRTAEDHSAPVGNGQDSELERLSVSASAGRQAAIQSKSTVMVLRNMVGPEDIDDDLEGEVMEECGKYGAVNRVIIYQERQGEEDDAEIIVKIFVEFSDAGEMNKAIQALNNRWFAGRKVVAELYDQDRFNSSDLTA.

RRM domains follow at residues 86 to 164 and 183 to 261; these read CRVY…RPGS and NRIY…KAVT. Residues 356 to 398 form a disordered region; the sequence is TAPASMGTPTSAVQLHTEVKREEDSRRTAEDHSAPVGNGQDSE. The span at 372–388 shows a compositional bias: basic and acidic residues; that stretch reads TEVKREEDSRRTAEDHS. The RRM 3; atypical domain maps to 419–506; it reads TVMVLRNMVG…RKVVAELYDQ (88 aa).

Belongs to the RRM half pint family.

The protein localises to the nucleus. Functionally, DNA- and RNA-binding protein, involved in transcription repression and pre-mRNA splicing. The sequence is that of Poly(U)-binding-splicing factor PUF60-B (puf60b) from Danio rerio (Zebrafish).